Here is a 263-residue protein sequence, read N- to C-terminus: Auxin-responsive protein IAA3 (263 aa).

Disordered stretches follow at residues 1–54 (MSPP…RRPA) and 76–121 (RVFP…PAAK). The span at 28-38 (RADDVDLKGTE) shows a compositional bias: basic and acidic residues. The EAR-like (transcriptional repression) motif lies at 39–43 (LRLGL). The PB1 domain maps to 158-245 (FLYVKVSMDG…SCRRLRIMKG (88 aa)).

It belongs to the Aux/IAA family. In terms of assembly, homodimers and heterodimers. Highly expressed in flowers. Expressed in roots and shoots.

The protein localises to the nucleus. Aux/IAA proteins are short-lived transcriptional factors that function as repressors of early auxin response genes at low auxin concentrations. The polypeptide is Auxin-responsive protein IAA3 (IAA3) (Oryza sativa subsp. japonica (Rice)).